Consider the following 88-residue polypeptide: Conotoxin Ca8.3 (88 aa).

Residues 1 to 21 form the signal peptide; it reads MMLKMGAMFVLLLLFILPSSQ. Residues 22–46 constitute a propeptide that is removed on maturation; that stretch reads QEGDVQARKTHLKSGFYGTLAMSTR.

This sequence belongs to the conotoxin S superfamily. Post-translationally, contains 5 disulfide bonds. Expressed by the venom duct.

The protein resides in the secreted. The chain is Conotoxin Ca8.3 from Conus caracteristicus (Characteristic cone).